A 496-amino-acid chain; its full sequence is Docking protein 3 (496 aa).

A disordered region spans residues 18–38 (LSLDGGTGSGQKGKCEEFPSS). Residues 63 to 179 (PIKDGILYQQ…WMGPICQLAF (117 aa)) enclose the PH domain. Phosphoserine is present on Ser194. In terms of domain architecture, IRS-type PTB spans 213-317 (EVGEFPVVVQ…ARQRERLPEL (105 aa)). The interval 313–363 (RLPELTRPQPCPLPRATSLPSLDTPGELREMPPGPEPPTSRKMHLAEPGPQ) is disordered. 2 positions are modified to phosphoserine: Ser330 and Ser364. Tyr381 carries the phosphotyrosine modification. Residues 408–447 (PTLHGGEPEPHEGPGSRSPTTSPIYHNGQDLSWPGPANDS) are disordered. Position 425 is a phosphoserine (Ser425).

This sequence belongs to the DOK family. Type A subfamily. On tyrosine phosphorylation, interacts with CSK and INPP5D/SHIP1 via their SH2 domains. Both Tyr-381 and Tyr-398 are required for interaction with INPP5D. Only Tyr-381 is required for interaction with CSK. Binds ABL1 through the PTB domain and in a kinase-dependent manner. Does not interact with RasGAP. In terms of processing, constitutively tyrosine-phosphorylated. On IL2 stimulation, phosphorylated on C-terminal tyrosine residues possibly by Src kinases. Can also be phosphorylated by ABL1 kinase. As to expression, expressed in spleen.

It is found in the cytoplasm. Its subcellular location is the cell membrane. In terms of biological role, DOK proteins are enzymatically inert adaptor or scaffolding proteins. They provide a docking platform for the assembly of multimolecular signaling complexes. DOK3 is a negative regulator of JNK signaling in B-cells through interaction with INPP5D/SHIP1. May modulate ABL1 function. This Homo sapiens (Human) protein is Docking protein 3 (DOK3).